The following is a 1898-amino-acid chain: Receptor-type tyrosine-protein phosphatase F (1898 aa).

The N-terminal stretch at 1–29 (MAPEPAPGRRMVPLVPALVMLGLMAGAHG) is a signal peptide. Residues 30-1254 (DSKPVFVKVP…QQQEEPEMLW (1225 aa)) are Extracellular-facing. Ig-like C2-type domains follow at residues 33–123 (PVFV…AKLS), 135–224 (PTID…ANLY), and 232–314 (PRFS…AQVT). Residues Cys-54 and Cys-107 are joined by a disulfide bond. 68 to 77 (KKGKKVSSQR) is a binding site for heparin. The N-linked (GlcNAc...) asparagine glycan is linked to Asn-117. Cys-156 and Cys-207 are oxidised to a cystine. N-linked (GlcNAc...) asparagine glycans are attached at residues Asn-250 and Asn-295. Cys-253 and Cys-298 are joined by a disulfide. 8 consecutive Fibronectin type-III domains span residues 321-411 (PPID…TGEQ), 416-510 (PPRR…TQQG), 514-604 (QPAD…TAQS), 609-706 (PPQK…TDED), 711-810 (PPRK…TTGA), 811-904 (VPGR…TPED), 909-1001 (FPQN…TMPV), and 1005-1089 (FAKN…TAPD). The interval 693–712 (GPESSPVLVRTDEDVPSGPP) is disordered. Asn-721 is a glycosylation site (N-linked (GlcNAc...) asparagine). 3 N-linked (GlcNAc...) asparagine glycosylation sites follow: Asn-941, Asn-957, and Asn-960. Residues 1255-1275 (VTGPVLAVILIILIVIAILLF) traverse the membrane as a helical segment. Over 1276–1898 (KRKRTHSPSS…YLGSFDHYAT (623 aa)) the chain is Cytoplasmic. Ser-1296 carries the post-translational modification Phosphoserine. Tyrosine-protein phosphatase domains follow at residues 1343 to 1598 (FSQE…LLEA) and 1630 to 1889 (MELE…ALEY). Substrate contacts are provided by residues Asp-1507, 1539–1545 (CSAGVGR), and Gln-1583. The Phosphocysteine intermediate role is filled by Cys-1539. The Phosphocysteine intermediate role is filled by Cys-1830.

Belongs to the protein-tyrosine phosphatase family. Receptor class 2A subfamily. As to quaternary structure, interacts with GRIP1. Interacts with PPFIA1, PPFIA2 and PPFIA3. Interacts with PTPRF. As to expression, expressed in the cell of the T lineage but not in cells of any other hemopoietic lineage.

The protein resides in the membrane. It carries out the reaction O-phospho-L-tyrosyl-[protein] + H2O = L-tyrosyl-[protein] + phosphate. In terms of biological role, possible cell adhesion receptor. It possesses an intrinsic protein tyrosine phosphatase activity (PTPase) and dephosphorylates EPHA2 regulating its activity. The sequence is that of Receptor-type tyrosine-protein phosphatase F (Ptprf) from Mus musculus (Mouse).